Reading from the N-terminus, the 181-residue chain is MRAYIYDEESQLSPQDEHESSQSVSKQELEKLGVLYWSIDSIDQVNSIAIQRDYKNRDQIICSPQAMGDIYQQKLDTFFEEHLHEDEEIRWVVEGSGYFDVRDQTDQRWVRIKVEKGDLLVLPPGIFHRFTVDKDNYIKAMRLFKDEPKWVALNRSTESESNPYRKAYIEQVGKAMTMGAF.

Over residues Met-1 to Ser-10 the composition is skewed to acidic residues. Positions Met-1–Ser-23 are disordered. Residues His-82, His-84, Glu-88, and His-128 each coordinate Fe(2+). Residues His-82, His-84, Glu-88, and His-128 each contribute to the Ni(2+) site.

It belongs to the acireductone dioxygenase (ARD) family. It depends on Fe(2+) as a cofactor. Ni(2+) is required as a cofactor.

The protein resides in the cytoplasm. It localises to the nucleus. It catalyses the reaction 1,2-dihydroxy-5-(methylsulfanyl)pent-1-en-3-one + O2 = 4-methylsulfanyl-2-oxobutanoate + formate + 2 H(+). The catalysed reaction is 1,2-dihydroxy-5-(methylsulfanyl)pent-1-en-3-one + O2 = 3-(methylsulfanyl)propanoate + CO + formate + 2 H(+). Its pathway is amino-acid biosynthesis; L-methionine biosynthesis via salvage pathway; L-methionine from S-methyl-5-thio-alpha-D-ribose 1-phosphate: step 5/6. In terms of biological role, catalyzes 2 different reactions between oxygen and the acireductone 1,2-dihydroxy-3-keto-5-methylthiopentene (DHK-MTPene) depending upon the metal bound in the active site. Fe-containing acireductone dioxygenase (Fe-ARD) produces formate and 2-keto-4-methylthiobutyrate (KMTB), the alpha-ketoacid precursor of methionine in the methionine recycle pathway. Ni-containing acireductone dioxygenase (Ni-ARD) produces methylthiopropionate, carbon monoxide and formate, and does not lie on the methionine recycle pathway. This chain is Acireductone dioxygenase, found in Puccinia graminis f. sp. tritici (strain CRL 75-36-700-3 / race SCCL) (Black stem rust fungus).